The following is a 79-amino-acid chain: UPF0180 protein BcerKBAB4_1316 (79 aa).

This sequence belongs to the UPF0180 family.

This is UPF0180 protein BcerKBAB4_1316 from Bacillus mycoides (strain KBAB4) (Bacillus weihenstephanensis).